Here is a 164-residue protein sequence, read N- to C-terminus: UPF0304 protein YPDSF_1971 (164 aa).

It belongs to the UPF0304 family.

The polypeptide is UPF0304 protein YPDSF_1971 (Yersinia pestis (strain Pestoides F)).